The following is a 339-amino-acid chain: 3-isopropylmalate dehydrogenase (339 aa).

Substrate is bound by residues R87, R97, R124, and D214. Residues D214, D238, and D242 each contribute to the Mg(2+) site. Residue G274–D286 participates in NAD(+) binding.

This sequence belongs to the isocitrate and isopropylmalate dehydrogenases family. LeuB type 2 subfamily. In terms of assembly, homodimer. Mg(2+) serves as cofactor. Requires Mn(2+) as cofactor.

It is found in the cytoplasm. The catalysed reaction is (2R,3S)-3-isopropylmalate + NAD(+) = 4-methyl-2-oxopentanoate + CO2 + NADH. Its pathway is amino-acid biosynthesis; L-leucine biosynthesis; L-leucine from 3-methyl-2-oxobutanoate: step 3/4. Catalyzes the oxidation of 3-carboxy-2-hydroxy-4-methylpentanoate (3-isopropylmalate) to 3-carboxy-4-methyl-2-oxopentanoate. The product decarboxylates to 4-methyl-2 oxopentanoate. This chain is 3-isopropylmalate dehydrogenase, found in Mycobacterium marinum (strain ATCC BAA-535 / M).